The following is a 498-amino-acid chain: ATP synthase subunit beta, chloroplastic (498 aa).

ATP is bound at residue 172–179; it reads GGAGVGKT.

It belongs to the ATPase alpha/beta chains family. In terms of assembly, F-type ATPases have 2 components, CF(1) - the catalytic core - and CF(0) - the membrane proton channel. CF(1) has five subunits: alpha(3), beta(3), gamma(1), delta(1), epsilon(1). CF(0) has four main subunits: a(1), b(1), b'(1) and c(9-12).

The protein localises to the plastid. Its subcellular location is the chloroplast thylakoid membrane. It carries out the reaction ATP + H2O + 4 H(+)(in) = ADP + phosphate + 5 H(+)(out). Functionally, produces ATP from ADP in the presence of a proton gradient across the membrane. The catalytic sites are hosted primarily by the beta subunits. The polypeptide is ATP synthase subunit beta, chloroplastic (Phormium tenax (New Zealand flax)).